The chain runs to 469 residues: Probable periplasmic serine endoprotease DegP-like (469 aa).

The N-terminal stretch at 1–25 (MKVCQKYTAVLLVWLSAVVSMRAGA) is a signal peptide. Active-site charge relay system residues include His-108, Asp-138, and Ser-211. Residues 209-211 (GNS) and 266-270 (LGVLI) each bind substrate. PDZ domains follow at residues 255 to 346 (LKDT…VRRG) and 352 to 457 (AVEI…IRQG).

This sequence belongs to the peptidase S1C family.

It is found in the periplasm. The enzyme catalyses Acts on substrates that are at least partially unfolded. The cleavage site P1 residue is normally between a pair of hydrophobic residues, such as Val-|-Val.. Functionally, might be efficient in the degradation of transiently denatured and unfolded proteins which accumulate in the periplasm following stress conditions. The protein is Probable periplasmic serine endoprotease DegP-like (mucD) of Hahella chejuensis (strain KCTC 2396).